The primary structure comprises 246 residues: Orotidine 5'-phosphate decarboxylase (246 aa).

Substrate-binding positions include Asp22, Lys44, 71–80 (DLKYHDIPHT), Thr130, Arg191, Gln201, Gly221, and Arg222. Lys73 functions as the Proton donor in the catalytic mechanism.

This sequence belongs to the OMP decarboxylase family. Type 1 subfamily. As to quaternary structure, homodimer.

The catalysed reaction is orotidine 5'-phosphate + H(+) = UMP + CO2. The protein operates within pyrimidine metabolism; UMP biosynthesis via de novo pathway; UMP from orotate: step 2/2. In terms of biological role, catalyzes the decarboxylation of orotidine 5'-monophosphate (OMP) to uridine 5'-monophosphate (UMP). The protein is Orotidine 5'-phosphate decarboxylase of Neisseria meningitidis serogroup B (strain ATCC BAA-335 / MC58).